Consider the following 259-residue polypeptide: UPF0246 protein PputW619_0896 (259 aa).

It belongs to the UPF0246 family.

This Pseudomonas putida (strain W619) protein is UPF0246 protein PputW619_0896.